Here is a 138-residue protein sequence, read N- to C-terminus: uncharacterized protein (138 aa).

The tract at residues Met-1–Asp-73 is disordered. The segment covering Leu-7–Gly-18 has biased composition (gly residues). Residues Gly-19–Ala-29 show a composition bias toward basic and acidic residues. Positions Glu-30–Ser-43 are enriched in low complexity. Residues Val-106–Val-126 form a helical membrane-spanning segment.

Belongs to the FAM241 family.

Its subcellular location is the membrane. This is an uncharacterized protein from Bos taurus (Bovine).